Consider the following 212-residue polypeptide: Endonuclease III (212 aa).

The 20-residue stretch at 108–127 (FKELVKLPGVGRKTANVVLN) folds into the HhH domain. C187, C194, C197, and C203 together coordinate [4Fe-4S] cluster.

Belongs to the Nth/MutY family. [4Fe-4S] cluster is required as a cofactor.

The enzyme catalyses 2'-deoxyribonucleotide-(2'-deoxyribose 5'-phosphate)-2'-deoxyribonucleotide-DNA = a 3'-end 2'-deoxyribonucleotide-(2,3-dehydro-2,3-deoxyribose 5'-phosphate)-DNA + a 5'-end 5'-phospho-2'-deoxyribonucleoside-DNA + H(+). Functionally, DNA repair enzyme that has both DNA N-glycosylase activity and AP-lyase activity. The DNA N-glycosylase activity releases various damaged pyrimidines from DNA by cleaving the N-glycosidic bond, leaving an AP (apurinic/apyrimidinic) site. The AP-lyase activity cleaves the phosphodiester bond 3' to the AP site by a beta-elimination, leaving a 3'-terminal unsaturated sugar and a product with a terminal 5'-phosphate. This chain is Endonuclease III, found in Rickettsia prowazekii (strain Madrid E).